A 539-amino-acid polypeptide reads, in one-letter code: 2-isopropylmalate synthase (539 aa).

Residues Val-8–Pro-269 enclose the Pyruvate carboxyltransferase domain. 4 residues coordinate Mn(2+): Asp-17, His-208, His-210, and Asn-244. The tract at residues Gln-408–Ile-539 is regulatory domain.

This sequence belongs to the alpha-IPM synthase/homocitrate synthase family. LeuA type 1 subfamily. In terms of assembly, homodimer. Mn(2+) is required as a cofactor.

It is found in the cytoplasm. It carries out the reaction 3-methyl-2-oxobutanoate + acetyl-CoA + H2O = (2S)-2-isopropylmalate + CoA + H(+). Its pathway is amino-acid biosynthesis; L-leucine biosynthesis; L-leucine from 3-methyl-2-oxobutanoate: step 1/4. Its function is as follows. Catalyzes the condensation of the acetyl group of acetyl-CoA with 3-methyl-2-oxobutanoate (2-ketoisovalerate) to form 3-carboxy-3-hydroxy-4-methylpentanoate (2-isopropylmalate). The polypeptide is 2-isopropylmalate synthase (Prochlorococcus marinus (strain NATL1A)).